The following is a 318-amino-acid chain: Apo-salmochelin esterase (318 aa).

Residues 13-32 form a helical membrane-spanning segment; that stretch reads KAIFFHLSCLTLICSAQVYA. Catalysis depends on residues S189 and H287.

Belongs to the esterase D family. As to quaternary structure, monomer.

The protein localises to the cell inner membrane. It catalyses the reaction enterobactin + H2O = N-(2,3-dihydroxybenzoyl)-L-serine trimer. The enzyme catalyses monoglucosyl-enterobactin + H2O = [N-(2,3-dihydroxybenzoyl)-L-seryl]2-N-(C-5-[deoxy-beta-D-glucosyl]-2,3-dihydroxybenzoyl)-L-serine + H(+). It carries out the reaction diglucosyl-enterobactin + H2O = N-(2,3-dihydroxybenzoyl)-L-seryl-[N-(C-5-[deoxy-beta-D-glucosyl]-2,3-dihydroxybenzoyl)-L-serine]2 + H(+). The catalysed reaction is triglucosyl-enterobactin + H2O = [N-(C-5-[deoxy-beta-D-glucosyl]-2,3-dihydroxybenzoyl)-L-serine]3 + H(+). Catalyzes the hydrolysis of both the apo and Fe3(+)-bound forms of enterobactin (Ent), monoglucosyl-C-Ent (MGE), diglucosyl-C-Ent (DGE) and triglucosyl-C-Ent (TGE). It prefers apo siderophores as substrates and hydrolyzes the Fe3(+)-bound siderophores very inefficiently. Tends to hydrolyze the trilactone just once to produce linearized trimers. May hydrolyze and linearize some or all of apo enterobactins while they are being exported. The sequence is that of Apo-salmochelin esterase from Escherichia coli O6:H1 (strain CFT073 / ATCC 700928 / UPEC).